The sequence spans 92 residues: Small ribosomal subunit protein uS19 (92 aa).

This sequence belongs to the universal ribosomal protein uS19 family.

Functionally, protein S19 forms a complex with S13 that binds strongly to the 16S ribosomal RNA. The chain is Small ribosomal subunit protein uS19 from Vibrio campbellii (strain ATCC BAA-1116).